A 434-amino-acid polypeptide reads, in one-letter code: Chaperone SurA (434 aa).

Residues 1–22 (MKPSKHLIFALFALAISQPTMA) form the signal peptide. 2 consecutive PpiC domains span residues 173–274 (DVEY…KIMD) and 283–383 (IEEV…QLEE).

It localises to the periplasm. It carries out the reaction [protein]-peptidylproline (omega=180) = [protein]-peptidylproline (omega=0). Functionally, chaperone involved in the correct folding and assembly of outer membrane proteins. Recognizes specific patterns of aromatic residues and the orientation of their side chains, which are found more frequently in integral outer membrane proteins. May act in both early periplasmic and late outer membrane-associated steps of protein maturation. This is Chaperone SurA from Shewanella oneidensis (strain ATCC 700550 / JCM 31522 / CIP 106686 / LMG 19005 / NCIMB 14063 / MR-1).